The following is a 71-amino-acid chain: Pro-glucagon (71 aa).

It belongs to the glucagon family.

The protein localises to the secreted. In terms of biological role, plays a key role in glucose metabolism and homeostasis. Regulates blood glucose by increasing gluconeogenesis and decreasing glycolysis. This chain is Pro-glucagon (gcg), found in Piaractus mesopotamicus (Small-scaled pacu).